A 251-amino-acid polypeptide reads, in one-letter code: 1-(5-phosphoribosyl)-5-[(5-phosphoribosylamino)methylideneamino] imidazole-4-carboxamide isomerase (251 aa).

Residue aspartate 8 is the Proton acceptor of the active site. Aspartate 131 (proton donor) is an active-site residue.

It belongs to the HisA/HisF family.

It is found in the cytoplasm. It catalyses the reaction 1-(5-phospho-beta-D-ribosyl)-5-[(5-phospho-beta-D-ribosylamino)methylideneamino]imidazole-4-carboxamide = 5-[(5-phospho-1-deoxy-D-ribulos-1-ylimino)methylamino]-1-(5-phospho-beta-D-ribosyl)imidazole-4-carboxamide. Its pathway is amino-acid biosynthesis; L-histidine biosynthesis; L-histidine from 5-phospho-alpha-D-ribose 1-diphosphate: step 4/9. The polypeptide is 1-(5-phosphoribosyl)-5-[(5-phosphoribosylamino)methylideneamino] imidazole-4-carboxamide isomerase (Burkholderia cenocepacia (strain ATCC BAA-245 / DSM 16553 / LMG 16656 / NCTC 13227 / J2315 / CF5610) (Burkholderia cepacia (strain J2315))).